Consider the following 444-residue polypeptide: Alpha-N-acetylgalactosaminidase (444 aa).

NAD(+) contacts are provided by residues 30-31 (LR), Asp-52, Asn-80, 101-104 (WEWH), His-107, 121-122 (EV), and Asn-150. Tyr-179 provides a ligand contact to substrate. 208 to 212 (SEAKW) serves as a coordination point for NAD(+). Residues Arg-213, 225-228 (YPTH), and Tyr-307 contribute to the substrate site. Residue Tyr-225 participates in NAD(+) binding.

This sequence belongs to the Gfo/Idh/MocA family. Glycosyl hydrolase 109 subfamily. It depends on NAD(+) as a cofactor.

It catalyses the reaction Cleavage of non-reducing alpha-(1-&gt;3)-N-acetylgalactosamine residues from human blood group A and AB mucin glycoproteins, Forssman hapten and blood group A lacto series glycolipids.. Its function is as follows. Glycosidase that has specific alpha-N-acetylgalactosaminidase activity. The chain is Alpha-N-acetylgalactosaminidase (nagA) from Elizabethkingia meningoseptica (Chryseobacterium meningosepticum).